The chain runs to 107 residues: Nucleoid-associated protein GDI3467/Gdia_2910 (107 aa).

It belongs to the YbaB/EbfC family. Homodimer.

It is found in the cytoplasm. Its subcellular location is the nucleoid. In terms of biological role, binds to DNA and alters its conformation. May be involved in regulation of gene expression, nucleoid organization and DNA protection. In Gluconacetobacter diazotrophicus (strain ATCC 49037 / DSM 5601 / CCUG 37298 / CIP 103539 / LMG 7603 / PAl5), this protein is Nucleoid-associated protein GDI3467/Gdia_2910.